Here is a 194-residue protein sequence, read N- to C-terminus: Imidazoleglycerol-phosphate dehydratase (194 aa).

Belongs to the imidazoleglycerol-phosphate dehydratase family.

The protein localises to the cytoplasm. It catalyses the reaction D-erythro-1-(imidazol-4-yl)glycerol 3-phosphate = 3-(imidazol-4-yl)-2-oxopropyl phosphate + H2O. It participates in amino-acid biosynthesis; L-histidine biosynthesis; L-histidine from 5-phospho-alpha-D-ribose 1-diphosphate: step 6/9. In Listeria monocytogenes serotype 4a (strain HCC23), this protein is Imidazoleglycerol-phosphate dehydratase.